The chain runs to 279 residues: Diaminopimelate epimerase (279 aa).

2 residues coordinate substrate: asparagine 13 and asparagine 66. Catalysis depends on cysteine 75, which acts as the Proton donor. Residues 76–77 (GN), asparagine 164, asparagine 197, and 215–216 (ER) each bind substrate. The active-site Proton acceptor is cysteine 224. 225 to 226 (GT) contributes to the substrate binding site.

The protein belongs to the diaminopimelate epimerase family. In terms of assembly, homodimer.

Its subcellular location is the cytoplasm. It catalyses the reaction (2S,6S)-2,6-diaminopimelate = meso-2,6-diaminopimelate. It functions in the pathway amino-acid biosynthesis; L-lysine biosynthesis via DAP pathway; DL-2,6-diaminopimelate from LL-2,6-diaminopimelate: step 1/1. In terms of biological role, catalyzes the stereoinversion of LL-2,6-diaminopimelate (L,L-DAP) to meso-diaminopimelate (meso-DAP), a precursor of L-lysine and an essential component of the bacterial peptidoglycan. The sequence is that of Diaminopimelate epimerase from Brachyspira hyodysenteriae (strain ATCC 49526 / WA1).